Reading from the N-terminus, the 101-residue chain is Small ribosomal subunit protein uS14 (101 aa).

The disordered stretch occupies residues 51–70 (LPRDSSPSRQRNRCRQTGRP).

The protein belongs to the universal ribosomal protein uS14 family. As to quaternary structure, part of the 30S ribosomal subunit. Contacts proteins S3 and S10.

Binds 16S rRNA, required for the assembly of 30S particles and may also be responsible for determining the conformation of the 16S rRNA at the A site. This is Small ribosomal subunit protein uS14 from Salmonella arizonae (strain ATCC BAA-731 / CDC346-86 / RSK2980).